A 950-amino-acid polypeptide reads, in one-letter code: Protocadherin alpha-3 (950 aa).

The signal sequence occupies residues methionine 1 to glycine 29. Cadherin domains lie at glutamine 30–phenylalanine 133, proline 134–phenylalanine 242, glutamate 243–leucine 350, valine 351–phenylalanine 455, serine 456–leucine 565, and valine 581–alanine 678. Over glutamine 30–asparagine 697 the chain is Extracellular. Asparagine 257 and asparagine 265 each carry an N-linked (GlcNAc...) asparagine glycan. N-linked (GlcNAc...) asparagine glycosylation occurs at asparagine 548. A helical membrane pass occupies residues valine 698–tyrosine 718. Over threonine 719–glutamine 950 the chain is Cytoplasmic. PXXP repeat units follow at residues proline 734–proline 737 and proline 774–proline 777. A 6 X 4 AA repeats of P-X-X-P region spans residues proline 734 to proline 894. 3 disordered regions span residues proline 777–tryptophan 806, glycine 831–proline 856, and phenylalanine 869–glutamine 950. A compositionally biased stretch (basic and acidic residues) spans serine 782–alanine 797. PXXP repeat units lie at residues proline 799–proline 802, proline 832–proline 835, proline 873–proline 876, and proline 891–proline 894. Positions aspartate 909–lysine 923 are enriched in basic and acidic residues.

It localises to the cell membrane. In terms of biological role, potential calcium-dependent cell-adhesion protein. May be involved in the establishment and maintenance of specific neuronal connections in the brain. The sequence is that of Protocadherin alpha-3 (PCDHA3) from Homo sapiens (Human).